The sequence spans 230 residues: MGEEGFLAHFAFSIGGLPITQSVLTTWFIMISLFIMAWSTTYKCSLLQPSTYQLIWEGVLSTMYDAIKEVLPDHVELIFPFVATLWIFILVSNLIGVIPGFYSPTADLSVTASLAIMTFLSVHWFGIRAEGWREYLKHYIKPTPFLLPFHLISEISRTLALAVRLFGNIMSLQLTALIVLMIAGFLVPIPILILHIIEAIIQAYIFGMLALIYIAGGIQAHELKSQGESL.

The next 5 helical transmembrane spans lie at 17–37 (LPITQSVLTTWFIMISLFIMA), 78–98 (IFPFVATLWIFILVSNLIGVI), 107–127 (DLSVTASLAIMTFLSVHWFGI), 165–187 (LFGNIMSLQLTALIVLMIAGFLV), and 198–218 (EAIIQAYIFGMLALIYIAGGI).

It belongs to the ATPase A chain family. In terms of assembly, F-type ATPases have 2 components, CF(1) - the catalytic core - and CF(0) - the membrane proton channel. CF(1) has five subunits: alpha(3), beta(3), gamma(1), delta(1), epsilon(1). CF(0) has three main subunits: a(1), b(2) and c(9-12). The alpha and beta chains form an alternating ring which encloses part of the gamma chain. CF(1) is attached to CF(0) by a central stalk formed by the gamma and epsilon chains, while a peripheral stalk is formed by the delta and b chains.

The protein resides in the cell inner membrane. Key component of the proton channel; it plays a direct role in the translocation of protons across the membrane. This is ATP synthase subunit a from Legionella pneumophila (strain Paris).